A 158-amino-acid polypeptide reads, in one-letter code: 2-C-methyl-D-erythritol 2,4-cyclodiphosphate synthase (158 aa).

The a divalent metal cation site is built by Asp-9 and His-11. 4-CDP-2-C-methyl-D-erythritol 2-phosphate contacts are provided by residues 9–11 (DVH) and 35–36 (HS). An a divalent metal cation-binding site is contributed by His-43. 4-CDP-2-C-methyl-D-erythritol 2-phosphate-binding positions include 57–59 (DIG), 62–66 (FPDTD), 101–107 (AQAPKMA), 133–136 (TTTE), Phe-140, and Arg-143.

This sequence belongs to the IspF family. As to quaternary structure, homotrimer. The cofactor is a divalent metal cation.

It catalyses the reaction 4-CDP-2-C-methyl-D-erythritol 2-phosphate = 2-C-methyl-D-erythritol 2,4-cyclic diphosphate + CMP. The protein operates within isoprenoid biosynthesis; isopentenyl diphosphate biosynthesis via DXP pathway; isopentenyl diphosphate from 1-deoxy-D-xylulose 5-phosphate: step 4/6. In terms of biological role, involved in the biosynthesis of isopentenyl diphosphate (IPP) and dimethylallyl diphosphate (DMAPP), two major building blocks of isoprenoid compounds. Catalyzes the conversion of 4-diphosphocytidyl-2-C-methyl-D-erythritol 2-phosphate (CDP-ME2P) to 2-C-methyl-D-erythritol 2,4-cyclodiphosphate (ME-CPP) with a corresponding release of cytidine 5-monophosphate (CMP). This is 2-C-methyl-D-erythritol 2,4-cyclodiphosphate synthase from Vibrio campbellii (strain ATCC BAA-1116).